The primary structure comprises 103 residues: Ribonuclease VapC14 (103 aa).

One can recognise a PINc domain in the interval 3–74 (YVLDTNVVSA…WFDDKVLRIF (72 aa)). Mg(2+) is bound at residue Asp6.

Belongs to the PINc/VapC protein family. The cofactor is Mg(2+).

Its function is as follows. Toxic component of a type II toxin-antitoxin (TA) system. An RNase. The cognate antitoxin is VapB14. In Mycobacterium tuberculosis (strain CDC 1551 / Oshkosh), this protein is Ribonuclease VapC14 (vapC14).